Consider the following 352-residue polypeptide: Glycerol-1-phosphate dehydrogenase [NAD(P)+] (352 aa).

Residues 98 to 102 (GKPID) and 120 to 123 (TAAS) each bind NAD(+). Asp-125 is a binding site for substrate. Residue Ser-129 participates in NAD(+) binding. Position 172 (Asp-172) interacts with substrate. The Zn(2+) site is built by Asp-172 and His-252. Residue His-256 coordinates substrate. Zn(2+) is bound at residue His-268.

This sequence belongs to the glycerol-1-phosphate dehydrogenase family. It depends on Zn(2+) as a cofactor.

It localises to the cytoplasm. The catalysed reaction is sn-glycerol 1-phosphate + NAD(+) = dihydroxyacetone phosphate + NADH + H(+). It catalyses the reaction sn-glycerol 1-phosphate + NADP(+) = dihydroxyacetone phosphate + NADPH + H(+). The protein operates within membrane lipid metabolism; glycerophospholipid metabolism. Its function is as follows. Catalyzes the NAD(P)H-dependent reduction of dihydroxyacetonephosphate (DHAP or glycerone phosphate) to glycerol 1-phosphate (G1P). The G1P thus generated is used as the glycerophosphate backbone of phospholipids in the cellular membranes of Archaea. The protein is Glycerol-1-phosphate dehydrogenase [NAD(P)+] of Natronomonas pharaonis (strain ATCC 35678 / DSM 2160 / CIP 103997 / JCM 8858 / NBRC 14720 / NCIMB 2260 / Gabara) (Halobacterium pharaonis).